The sequence spans 157 residues: Protein FAM219A (157 aa).

An N-acetylmethionine modification is found at Met-1. The segment at 1 to 103 (MMEEIDRFQD…SRYSSSGYSS (103 aa)) is disordered. The segment covering 17–33 (SDRDCDAREEKQRELAR) has biased composition (basic and acidic residues). Residues 38 to 52 (KNGSMGSPVNQQPKK) show a composition bias toward polar residues. A phosphoserine mark is found at Ser-44 and Ser-74. Residue Thr-85 is modified to Phosphothreonine. A phosphoserine mark is found at Ser-87 and Ser-94. Positions 94-103 (SRYSSSGYSS) are enriched in low complexity.

The protein belongs to the FAM219 family.

The protein is Protein FAM219A (Fam219a) of Mus musculus (Mouse).